The following is a 150-amino-acid chain: Ribonuclease H (150 aa).

An RNase H type-1 domain is found at 3 to 144 (DKDMIEIWTD…ADGLARKGTD (142 aa)). Mg(2+) is bound by residues D12, E50, D72, and D136. The segment at 129–150 (DEGNERADGLARKGTDEVRGRK) is disordered.

Belongs to the RNase H family. As to quaternary structure, monomer. Mg(2+) serves as cofactor.

Its subcellular location is the cytoplasm. The catalysed reaction is Endonucleolytic cleavage to 5'-phosphomonoester.. In terms of biological role, endonuclease that specifically degrades the RNA of RNA-DNA hybrids. The sequence is that of Ribonuclease H from Hyphomonas neptunium (strain ATCC 15444).